A 411-amino-acid polypeptide reads, in one-letter code: Serine hydroxymethyltransferase (411 aa).

Residues leucine 117 and 121–123 (GHL) contribute to the (6S)-5,6,7,8-tetrahydrofolate site. Lysine 226 is modified (N6-(pyridoxal phosphate)lysine).

Belongs to the SHMT family. As to quaternary structure, homodimer. Pyridoxal 5'-phosphate serves as cofactor.

The protein localises to the cytoplasm. The catalysed reaction is (6R)-5,10-methylene-5,6,7,8-tetrahydrofolate + glycine + H2O = (6S)-5,6,7,8-tetrahydrofolate + L-serine. The protein operates within one-carbon metabolism; tetrahydrofolate interconversion. It participates in amino-acid biosynthesis; glycine biosynthesis; glycine from L-serine: step 1/1. Catalyzes the reversible interconversion of serine and glycine with tetrahydrofolate (THF) serving as the one-carbon carrier. This reaction serves as the major source of one-carbon groups required for the biosynthesis of purines, thymidylate, methionine, and other important biomolecules. Also exhibits THF-independent aldolase activity toward beta-hydroxyamino acids, producing glycine and aldehydes, via a retro-aldol mechanism. This chain is Serine hydroxymethyltransferase, found in Syntrophobacter fumaroxidans (strain DSM 10017 / MPOB).